Reading from the N-terminus, the 254-residue chain is CRISPR-associated endoribonuclease Cas6 1 (254 aa).

The active-site Proton acceptor is the Tyr32. His47 acts as the Proton donor in catalysis.

It belongs to the CRISPR-associated protein Cas6/Cse3/CasE family.

Functionally, CRISPR (clustered regularly interspaced short palindromic repeat) is an adaptive immune system that provides protection against mobile genetic elements (viruses, transposable elements and conjugative plasmids). CRISPR clusters contain sequences complementary to antecedent mobile elements and target invading nucleic acids. CRISPR clusters are transcribed and processed into CRISPR RNA (crRNA). This protein processes pre-crRNA into individual crRNA units. In Methanocaldococcus jannaschii (strain ATCC 43067 / DSM 2661 / JAL-1 / JCM 10045 / NBRC 100440) (Methanococcus jannaschii), this protein is CRISPR-associated endoribonuclease Cas6 1 (cas6a).